We begin with the raw amino-acid sequence, 693 residues long: Adhesion G-protein coupled receptor G1 (693 aa).

Positions 1–25 (MTPQSLLQTTLFLLSLLFLVQGAHG) are cleaved as a signal peptide. 26–33 (RGHREDFR) serves as a coordination point for heparin. The Extracellular portion of the chain corresponds to 26–401 (RGHREDFRFC…SVEVDAVHKH (376 aa)). Cystine bridges form between C35/C91 and C121/C177. N-linked (GlcNAc...) asparagine glycans are attached at residues N39, N148, and N171. Heparin is bound at residue 190–200 (LKHPQKASRRP). Residues 224–395 (DMVSFEEDRI…AVLMVSSVEV (172 aa)) form the GAIN-B domain. N-linked (GlcNAc...) asparagine glycans are attached at residues N234, N303, N324, and N341. 2 disulfide bridges follow: C346–C377 and C366–C379. The interval 346-395 (CVFWVEDPTLSSPGHWSSAGCETVRRETQTSCFCNHLTYFAVLMVSSVEV) is GPS. The stachel stretch occupies residues 384-397 (YFAVLMVSSVEVDA). A helical transmembrane segment spans residues 402–424 (YLSLLSYVGCVVSALACLVTIAA). The Cytoplasmic portion of the chain corresponds to 425–437 (YLCSRVPLPCRRK). Residues 438-460 (PRDYTIKVHMNLLLAVFLLDTSF) form a helical membrane-spanning segment. Over 461–465 (LLSEP) the chain is Extracellular. A helical membrane pass occupies residues 466-495 (VALTGSEAGCRASAIFLHFSLLTCLSWMGL). C475 and C562 are disulfide-bonded. Topologically, residues 496–510 (EGYNLYRLVVEVFGT) are cytoplasmic. Residues 511–533 (YVPGYLLKLSAMGWGFPIFLVTL) form a helical membrane-spanning segment. Over 534–562 (VALVDVDNYGPIILAVHRTPEGVIYPSMC) the chain is Extracellular. The chain crosses the membrane as a helical span at residues 563-588 (WIRDSLVSYITNLGLFSLVFLFNMAM). Over 589 to 602 (LATMVVQILRLRPH) the chain is Cytoplasmic. Residues 603–624 (TQKWSHVLTLLGLSLVLGLPWA) traverse the membrane as a helical segment. The Extracellular segment spans residues 625 to 628 (LIFF). Residues 629 to 654 (SFASGTFQLVVLYLFSIITSFQGFLI) traverse the membrane as a helical segment. The Cytoplasmic segment spans residues 655-693 (FIWYWSMRLQARGGPSPLKSNSDSARLPISSGSTSSSRI). Positions 670-693 (SPLKSNSDSARLPISSGSTSSSRI) are disordered. Low complexity predominate over residues 684-693 (SSGSTSSSRI).

It belongs to the G-protein coupled receptor 2 family. LN-TM7 subfamily. In terms of assembly, heterodimer of 2 chains generated by proteolytic processing; the large extracellular N-terminal fragment (ADGRG1 NT) and the membrane-bound C-terminal fragment (ADGRG1-CT) predominantly remain associated and non-covalently linked. ADGRG1 NT self-associates in a trans-trans manner; the homophilic interaction enhances receptor signaling. Interacts with TGM2. Interacts with heparin; leading to the reduction of ADGRG1 shedding. Interacts with COL3A1. Part of a GPCR-tetraspanin complex at least consisting of ADGRG1, CD81, eventually CD9, and GNA11 in which CD81 is enhancing the association of ADGRG1 with GNA11. Post-translationally, autoproteolytically cleaved into 2 fragments; the large extracellular N-terminal fragment (ADGRG1 NT) and the membrane-bound C-terminal fragment (ADGRG1 CT) predominantly remain associated and non-covalently linked. Shedding to yield the secreted ADGRG1 N-terminal fragment seems to involve metalloprotease(s). N-glycosylated. Contains sialic acid residues. In terms of processing, ubiquitinated. Undergoes polyubiquitination upon activation. Widely distributed with highest levels found in thyroid gland, brain and heart. Expressed in a great number of tumor cells. Expression is down-regulated in different tumors from highly metastatic cells.

It localises to the cell membrane. Its subcellular location is the secreted. The protein resides in the membrane raft. With respect to regulation, forms a heterodimer of 2 chains generated by proteolytic processing that remain associated through non-covalent interactions mediated by the GAIN-B domain. In the inactivated receptor, the Stachel sequence (also named stalk) is embedded in the GAIN-B domain, where it adopts a beta-strand conformation. On activation, the Stachel moves into the 7 transmembrane region and adopts a twisted hook-shaped configuration that forms contacts within the receptor, leading to coupling of a G-alpha protein, which activates signaling. The cleaved GAIN-B and N-terminal domains can then dissociate from the rest of the receptor. Adhesion G-protein coupled receptor (aGPCR) for steroid hormone 17alpha-hydroxypregnenolone (17-OH), which is involved in cell adhesion and cell-cell interactions. Ligand binding causes a conformation change that triggers signaling via guanine nucleotide-binding proteins (G proteins) and modulates the activity of downstream effectors, such as RhoA pathway. ADGRG1 is coupled to G(12) and/or G(13) G proteins (GNA12 and GNA13, respectively) and mediates the activation Rho small GTPases. Acts as a potent suppressor of ferroptosis: binding to 17-OH-binding initiates signaling that down-regulates CD36 and alleviates ferroptosis-induced liver injury. Ligand-binding also induces cell adhesion activity via association with proteins such as collagen III/COL3A1 and TGM2. Mediates cell matrix adhesion in developing neurons and hematopoietic stem cells. Involved in cortical development, specifically in maintenance of the pial basement membrane integrity and in cortical lamination: association with COL3A1 in the developing brain inhibits neuronal migration via activation of the RhoA pathway. Together with TGM2, acts as a regulator of myelination and myelin repair in oligodendrocyte precursor cells. Acts as a hemostatic sensor of shear force: G protein-coupled receptor signaling is activated in response to shear force in platelets, promoting G(13) G protein signaling, and platelet shape change and aggregation in a COL3A1-dependent manner. Acts as an inhibitor of VEGFA production thereby inhibiting angiogenesis through a signaling pathway mediated by PRKCA. Plays a role in the maintenance of hematopoietic stem cells in bone marrow niche. Plays an essential role in testis development. In Homo sapiens (Human), this protein is Adhesion G-protein coupled receptor G1.